Here is a 347-residue protein sequence, read N- to C-terminus: Ribosomal RNA small subunit methyltransferase C (347 aa).

The protein belongs to the methyltransferase superfamily. RsmC family. Monomer.

The protein resides in the cytoplasm. It catalyses the reaction guanosine(1207) in 16S rRNA + S-adenosyl-L-methionine = N(2)-methylguanosine(1207) in 16S rRNA + S-adenosyl-L-homocysteine + H(+). In terms of biological role, specifically methylates the guanine in position 1207 of 16S rRNA in the 30S particle. The polypeptide is Ribosomal RNA small subunit methyltransferase C (Yersinia pseudotuberculosis serotype IB (strain PB1/+)).